Consider the following 704-residue polypeptide: Elongation factor G (704 aa).

In terms of domain architecture, tr-type G spans 8 to 291 (DKVRNIGIMA…AVVEYLASPV (284 aa)). Residues 17–24 (AHIDAGKT), 90–94 (DTPGH), and 144–147 (NKMD) contribute to the GTP site.

The protein belongs to the TRAFAC class translation factor GTPase superfamily. Classic translation factor GTPase family. EF-G/EF-2 subfamily.

Its subcellular location is the cytoplasm. In terms of biological role, catalyzes the GTP-dependent ribosomal translocation step during translation elongation. During this step, the ribosome changes from the pre-translocational (PRE) to the post-translocational (POST) state as the newly formed A-site-bound peptidyl-tRNA and P-site-bound deacylated tRNA move to the P and E sites, respectively. Catalyzes the coordinated movement of the two tRNA molecules, the mRNA and conformational changes in the ribosome. This chain is Elongation factor G, found in Chlorobium limicola (strain DSM 245 / NBRC 103803 / 6330).